A 247-amino-acid polypeptide reads, in one-letter code: tRNA pseudouridine synthase A (247 aa).

Asp-52 acts as the Nucleophile in catalysis. Tyr-110 provides a ligand contact to substrate.

This sequence belongs to the tRNA pseudouridine synthase TruA family. Homodimer.

It carries out the reaction uridine(38/39/40) in tRNA = pseudouridine(38/39/40) in tRNA. In terms of biological role, formation of pseudouridine at positions 38, 39 and 40 in the anticodon stem and loop of transfer RNAs. This Hyphomonas neptunium (strain ATCC 15444) protein is tRNA pseudouridine synthase A.